A 173-amino-acid polypeptide reads, in one-letter code: 2-C-methyl-D-erythritol 2,4-cyclodiphosphate synthase (173 aa).

A divalent metal cation is bound by residues Asp17 and His19. 4-CDP-2-C-methyl-D-erythritol 2-phosphate-binding positions include 17 to 19 and 49 to 50; these read DVH and HS. Residue His57 participates in a divalent metal cation binding. 4-CDP-2-C-methyl-D-erythritol 2-phosphate-binding positions include 76 to 80, 147 to 150, Phe154, and Arg157; these read FPNTD and TTTE.

Belongs to the IspF family. Homotrimer. A divalent metal cation serves as cofactor.

It catalyses the reaction 4-CDP-2-C-methyl-D-erythritol 2-phosphate = 2-C-methyl-D-erythritol 2,4-cyclic diphosphate + CMP. It participates in isoprenoid biosynthesis; isopentenyl diphosphate biosynthesis via DXP pathway; isopentenyl diphosphate from 1-deoxy-D-xylulose 5-phosphate: step 4/6. Functionally, involved in the biosynthesis of isopentenyl diphosphate (IPP) and dimethylallyl diphosphate (DMAPP), two major building blocks of isoprenoid compounds. Catalyzes the conversion of 4-diphosphocytidyl-2-C-methyl-D-erythritol 2-phosphate (CDP-ME2P) to 2-C-methyl-D-erythritol 2,4-cyclodiphosphate (ME-CPP) with a corresponding release of cytidine 5-monophosphate (CMP). In Ehrlichia chaffeensis (strain ATCC CRL-10679 / Arkansas), this protein is 2-C-methyl-D-erythritol 2,4-cyclodiphosphate synthase.